Reading from the N-terminus, the 48-residue chain is ATP synthase protein 8 (48 aa).

Residues 16-36 (GFLLMTILLVLFSQFFLPMIL) form a helical membrane-spanning segment.

It belongs to the ATPase protein 8 family. In terms of assembly, F-type ATPases have 2 components, CF(1) - the catalytic core - and CF(0) - the membrane proton channel.

It localises to the mitochondrion membrane. Mitochondrial membrane ATP synthase (F(1)F(0) ATP synthase or Complex V) produces ATP from ADP in the presence of a proton gradient across the membrane which is generated by electron transport complexes of the respiratory chain. F-type ATPases consist of two structural domains, F(1) - containing the extramembraneous catalytic core and F(0) - containing the membrane proton channel, linked together by a central stalk and a peripheral stalk. During catalysis, ATP synthesis in the catalytic domain of F(1) is coupled via a rotary mechanism of the central stalk subunits to proton translocation. Part of the complex F(0) domain. Minor subunit located with subunit a in the membrane. This Vanderwaltozyma polyspora (strain ATCC 22028 / DSM 70294 / BCRC 21397 / CBS 2163 / NBRC 10782 / NRRL Y-8283 / UCD 57-17) (Kluyveromyces polysporus) protein is ATP synthase protein 8 (ATP8).